The chain runs to 59 residues: MLSWALIFFIIAIIAAAFGFGGIAVAAAGIAKILFFLFLVMFVIFLIMGLIGRRGPPPV.

2 consecutive transmembrane segments (helical) span residues 5–25 (ALIF…GIAV) and 30–50 (IAKI…IMGL).

The protein belongs to the UPF0391 family.

It localises to the cell membrane. The protein is UPF0391 membrane protein lpl2443 of Legionella pneumophila (strain Lens).